A 510-amino-acid polypeptide reads, in one-letter code: 2,3-bisphosphoglycerate-independent phosphoglycerate mutase (510 aa).

Residues Asp-16 and Ser-66 each coordinate Mn(2+). Ser-66 serves as the catalytic Phosphoserine intermediate. Residues His-127, Arg-156 to Asp-157, Arg-186, Arg-192, Arg-257 to Arg-260, and Lys-333 contribute to the substrate site. Residues Asp-400, His-404, Asp-441, His-442, and His-460 each coordinate Mn(2+).

Belongs to the BPG-independent phosphoglycerate mutase family. In terms of assembly, monomer. The cofactor is Mn(2+).

The catalysed reaction is (2R)-2-phosphoglycerate = (2R)-3-phosphoglycerate. It participates in carbohydrate degradation; glycolysis; pyruvate from D-glyceraldehyde 3-phosphate: step 3/5. Functionally, catalyzes the interconversion of 2-phosphoglycerate and 3-phosphoglycerate. This chain is 2,3-bisphosphoglycerate-independent phosphoglycerate mutase, found in Gluconobacter oxydans (strain 621H) (Gluconobacter suboxydans).